The following is a 394-amino-acid chain: Succinate--CoA ligase [ADP-forming] subunit beta (394 aa).

An ATP-grasp domain is found at 9–243; sequence KDILAGFGIA…YSQLNPLEIA (235 aa). ATP contacts are provided by residues lysine 45, 52-54, glutamate 98, valine 101, and glutamate 106; that span reads GRG. Residues asparagine 198 and aspartate 212 each contribute to the Mg(2+) site. Residues asparagine 263 and 320–322 contribute to the substrate site; that span reads GIM.

Belongs to the succinate/malate CoA ligase beta subunit family. Heterotetramer of two alpha and two beta subunits. It depends on Mg(2+) as a cofactor.

The enzyme catalyses succinate + ATP + CoA = succinyl-CoA + ADP + phosphate. It carries out the reaction GTP + succinate + CoA = succinyl-CoA + GDP + phosphate. It functions in the pathway carbohydrate metabolism; tricarboxylic acid cycle; succinate from succinyl-CoA (ligase route): step 1/1. Functionally, succinyl-CoA synthetase functions in the citric acid cycle (TCA), coupling the hydrolysis of succinyl-CoA to the synthesis of either ATP or GTP and thus represents the only step of substrate-level phosphorylation in the TCA. The beta subunit provides nucleotide specificity of the enzyme and binds the substrate succinate, while the binding sites for coenzyme A and phosphate are found in the alpha subunit. This Pelobacter propionicus (strain DSM 2379 / NBRC 103807 / OttBd1) protein is Succinate--CoA ligase [ADP-forming] subunit beta.